The sequence spans 362 residues: Histidinol-phosphate aminotransferase (362 aa).

The residue at position 210 (Lys210) is an N6-(pyridoxal phosphate)lysine.

The protein belongs to the class-II pyridoxal-phosphate-dependent aminotransferase family. Histidinol-phosphate aminotransferase subfamily. Homodimer. It depends on pyridoxal 5'-phosphate as a cofactor.

The catalysed reaction is L-histidinol phosphate + 2-oxoglutarate = 3-(imidazol-4-yl)-2-oxopropyl phosphate + L-glutamate. It participates in amino-acid biosynthesis; L-histidine biosynthesis; L-histidine from 5-phospho-alpha-D-ribose 1-diphosphate: step 7/9. The sequence is that of Histidinol-phosphate aminotransferase from Rhodopirellula baltica (strain DSM 10527 / NCIMB 13988 / SH1).